The sequence spans 693 residues: Phosphoribosylformylglycinamidine synthase subunit PurL (693 aa).

Residue His34 is part of the active site. Tyr37 and Lys76 together coordinate ATP. Glu78 is a binding site for Mg(2+). Substrate contacts are provided by residues 79 to 82 (SHNH) and Arg101. Catalysis depends on His80, which acts as the Proton acceptor. Asp102 is a Mg(2+) binding site. Residue Gln222 coordinates substrate. Asp248 is a Mg(2+) binding site. 292-294 (ETQ) contributes to the substrate binding site. ATP is bound by residues Asp470 and Gly507. Residue Ser510 coordinates substrate.

Belongs to the FGAMS family. Monomer. Part of the FGAM synthase complex composed of 1 PurL, 1 PurQ and 2 PurS subunits.

The protein resides in the cytoplasm. It catalyses the reaction N(2)-formyl-N(1)-(5-phospho-beta-D-ribosyl)glycinamide + L-glutamine + ATP + H2O = 2-formamido-N(1)-(5-O-phospho-beta-D-ribosyl)acetamidine + L-glutamate + ADP + phosphate + H(+). Its pathway is purine metabolism; IMP biosynthesis via de novo pathway; 5-amino-1-(5-phospho-D-ribosyl)imidazole from N(2)-formyl-N(1)-(5-phospho-D-ribosyl)glycinamide: step 1/2. Its function is as follows. Part of the phosphoribosylformylglycinamidine synthase complex involved in the purines biosynthetic pathway. Catalyzes the ATP-dependent conversion of formylglycinamide ribonucleotide (FGAR) and glutamine to yield formylglycinamidine ribonucleotide (FGAM) and glutamate. The FGAM synthase complex is composed of three subunits. PurQ produces an ammonia molecule by converting glutamine to glutamate. PurL transfers the ammonia molecule to FGAR to form FGAM in an ATP-dependent manner. PurS interacts with PurQ and PurL and is thought to assist in the transfer of the ammonia molecule from PurQ to PurL. This chain is Phosphoribosylformylglycinamidine synthase subunit PurL, found in Pyrobaculum calidifontis (strain DSM 21063 / JCM 11548 / VA1).